We begin with the raw amino-acid sequence, 101 residues long: Putative pterin-4-alpha-carbinolamine dehydratase (101 aa).

This sequence belongs to the pterin-4-alpha-carbinolamine dehydratase family.

The enzyme catalyses (4aS,6R)-4a-hydroxy-L-erythro-5,6,7,8-tetrahydrobiopterin = (6R)-L-erythro-6,7-dihydrobiopterin + H2O. The protein is Putative pterin-4-alpha-carbinolamine dehydratase of Streptomyces coelicolor (strain ATCC BAA-471 / A3(2) / M145).